The primary structure comprises 94 residues: Small ribosomal subunit protein uS19 (94 aa).

It belongs to the universal ribosomal protein uS19 family.

Its function is as follows. Protein S19 forms a complex with S13 that binds strongly to the 16S ribosomal RNA. The sequence is that of Small ribosomal subunit protein uS19 from Wolbachia pipientis subsp. Culex pipiens (strain wPip).